A 100-amino-acid polypeptide reads, in one-letter code: Small ribosomal subunit protein uS14 (100 aa).

It belongs to the universal ribosomal protein uS14 family. As to quaternary structure, part of the 30S ribosomal subunit. Contacts proteins S3 and S10.

Functionally, binds 16S rRNA, required for the assembly of 30S particles and may also be responsible for determining the conformation of the 16S rRNA at the A site. This Parasynechococcus marenigrum (strain WH8102) protein is Small ribosomal subunit protein uS14.